A 1120-amino-acid chain; its full sequence is Topless-related protein 1 (1120 aa).

Residues 4–36 enclose the LisH domain; the sequence is LSRELVFLILQFLDEEKFKETVHKLEQESGFFF. Residues 34 to 92 form the CTLH domain; sequence FFFNMKYFEDEVHNGNWDEVEKYLSGFTKVDDNRYSMKIFFEIRKQKYLEALDRHDRPK. Disordered stretches follow at residues 210–235 and 283–307; these read ARAP…PLGA and HPRT…SKRT. Ser-214 carries the phosphoserine modification. WD repeat units follow at residues 353–393, 415–454, 460–501, 504–545, 548–591, 595–634, 639–678, 699–745, 755–794, 822–860, 863–903, 906–945, 999–1038, and 1052–1091; these read SQGS…RLVQ, EPVV…DMRQ, AHVG…KRYT, GHEA…SRVD, APGR…VKRT, FHKR…LLTA, GGLQ…RLLH, ERPA…EPSQ, MRVT…RNAT, NPEE…TMAT, PPPP…VKSK, GHSK…KQKS, ESAA…LRCR, and SNVH…GKWG. Residues 1087–1120 are disordered; it reads EGKWGVAPPPENGSASAVTATPSVGASASDQPQR. A compositionally biased stretch (polar residues) spans 1099–1120; sequence GSASAVTATPSVGASASDQPQR.

In terms of assembly, tetramer. Interacts with SNC1 (via TIR domain) and HDA19. Interacts with SPL (via EAR motif). Interacts with SPEAR3/TIE1. Binds to and corepresses GAF1/IDD2. In terms of tissue distribution, highly expressed in stamen primordium, microsporocyte, ovule primordium and megasporocyte during sporogenesis.

Its subcellular location is the nucleus. In terms of biological role, transcriptional corepressor. Activates TIR-NB-LRR R protein-mediated immune responses through repression of negative regulators such as CNGC2/DND1. Negative regulator of jasmonate responses. In Arabidopsis thaliana (Mouse-ear cress), this protein is Topless-related protein 1 (TPR1).